A 259-amino-acid chain; its full sequence is Haloacid dehalogenase-like hydrolase domain-containing protein 2 (259 aa).

2 residues coordinate Mg(2+): Asp13 and Ser15. Substrate is bound by residues 13 to 15 (DLS) and 46 to 47 (TN). Positions 47-71 (NTTKESKQDLLERLRKLEFDISEDE) form a coiled coil. Position 50 is an N6-succinyllysine (Lys50). Lys179 contacts substrate. Residue Asp204 coordinates Mg(2+).

Belongs to the HAD-like hydrolase superfamily. Mg(2+) serves as cofactor.

This is Haloacid dehalogenase-like hydrolase domain-containing protein 2 (HDHD2) from Pongo abelii (Sumatran orangutan).